The sequence spans 1202 residues: CHD3-type chromatin-remodeling factor CHR7 (1202 aa).

Chromo domains follow at residues 45-109 and 142-201; these read GEIE…HPHL and KTVD…RDKY. A Helicase ATP-binding domain is found at 237–405; sequence RYSWSKKTNV…FALMHFLDAD (169 aa). Residue 250–257 participates in ATP binding; sequence DEMGLGKT. A DEAH box motif is present at residues 356 to 359; that stretch reads DEGH. Positions 528 to 679 constitute a Helicase C-terminal domain; sequence LLDKMMVKLK…HLVVGKQHLC (152 aa). The tract at residues 838 to 872 is disordered; sequence TSDEEEEADEPEAARQRKPRTVTRPYRKRARDNSE. Residues 853 to 867 are compositionally biased toward basic residues; the sequence is QRKPRTVTRPYRKRA.

The protein belongs to the SNF2/RAD54 helicase family.

It localises to the nucleus. In terms of biological role, chromatin remodeling factor that represses the expression of embryonic trait genes upon and after seed germination and thus enables the developmental switch to post-germinative growth. This chain is CHD3-type chromatin-remodeling factor CHR7, found in Arabidopsis thaliana (Mouse-ear cress).